The chain runs to 614 residues: Putative ABC transporter ATP-binding protein MA_1747 (614 aa).

ABC transporter domains are found at residues 11-251 (VRLE…KLGI) and 319-552 (VLIE…AGLL). Residues 45–52 (GPSGCGKS) and 352–359 (GHNGAGKT) contribute to the ATP site.

The protein belongs to the ABC transporter superfamily.

Its subcellular location is the cell membrane. Functionally, probably part of an ABC transporter complex. Responsible for energy coupling to the transport system. This chain is Putative ABC transporter ATP-binding protein MA_1747, found in Methanosarcina acetivorans (strain ATCC 35395 / DSM 2834 / JCM 12185 / C2A).